A 363-amino-acid polypeptide reads, in one-letter code: Phospho-N-acetylmuramoyl-pentapeptide-transferase (363 aa).

Helical transmembrane passes span 15–33 (FTTL…SFIF), 82–102 (NTPT…LLIV), 106–126 (FYSM…IIGF), 147–167 (FILQ…NGYI), 183–203 (IVIF…VNLT), 207–227 (DGLA…EIFI), 233–253 (LIIY…FLKF), 260–280 (IFMG…ISIL), 285–305 (FTLF…IIQV), and 341–361 (IVEN…VLKI).

This sequence belongs to the glycosyltransferase 4 family. MraY subfamily. The cofactor is Mg(2+).

The protein resides in the cell inner membrane. It carries out the reaction UDP-N-acetyl-alpha-D-muramoyl-L-alanyl-gamma-D-glutamyl-meso-2,6-diaminopimeloyl-D-alanyl-D-alanine + di-trans,octa-cis-undecaprenyl phosphate = di-trans,octa-cis-undecaprenyl diphospho-N-acetyl-alpha-D-muramoyl-L-alanyl-D-glutamyl-meso-2,6-diaminopimeloyl-D-alanyl-D-alanine + UMP. It participates in cell wall biogenesis; peptidoglycan biosynthesis. Functionally, catalyzes the initial step of the lipid cycle reactions in the biosynthesis of the cell wall peptidoglycan: transfers peptidoglycan precursor phospho-MurNAc-pentapeptide from UDP-MurNAc-pentapeptide onto the lipid carrier undecaprenyl phosphate, yielding undecaprenyl-pyrophosphoryl-MurNAc-pentapeptide, known as lipid I. The chain is Phospho-N-acetylmuramoyl-pentapeptide-transferase from Prochlorococcus marinus (strain MIT 9515).